Here is a 616-residue protein sequence, read N- to C-terminus: Chaperone protein DnaK (616 aa).

Threonine 175 is modified (phosphothreonine; by autocatalysis). The tract at residues 579–605 (GGDPSQAGGFDPNAAGGAQQAPHDDNV) is disordered.

This sequence belongs to the heat shock protein 70 family.

Acts as a chaperone. The protein is Chaperone protein DnaK of Clostridium botulinum (strain Alaska E43 / Type E3).